The sequence spans 557 residues: DNA replication factor Cdt1 (557 aa).

The short motif at Met-1–Ile-25 is the PIP-box K+4 motif element. The disordered stretch occupies residues Pro-20–Lys-113. Phosphothreonine; by MAPK8 is present on Thr-28. Residue Ser-30 is modified to Phosphoserine. The short motif at Arg-65–Leu-67 is the Cyclin-binding motif element. Positions Leu-69 to Glu-81 are enriched in low complexity. Pro residues predominate over residues Pro-82 to Pro-106. Position 107 is a phosphoserine; by MAPK8 (Ser-107). Positions Pro-163–Tyr-203 are interaction with GMNN. Residue Ser-392 is modified to Phosphoserine. The disordered stretch occupies residues Arg-397–Leu-427. Residues Ser-407–Ala-422 are compositionally biased toward pro residues. The segment at Leu-463–Leu-557 is interaction with LRWD1.

Belongs to the Cdt1 family. Interacts with GMNN; the interaction inhibits the binding of the MCM complex to origins of replication. Interacts with MCM6. Interacts with CDC6; are mutually dependent on one another for loading MCM complexes onto chromatin. Interacts with PCNA. Interacts with LRWD1 during G1 phase and during mitosis. Interacts with NDC80 subunit of the NDC80 complex; leading to kinetochore localization. Interacts with KAT7. Interacts with ubiquitin-binding protein FAF1; the interaction is likely to promote CDT1 degradation. Two independent E3 ubiquitin ligase complexes, SCF(SKP2) and the DCX(DTL) complex, mediated CDT1 degradation in S phase. Ubiquitinated by the DCX(DTL) complex, in response to DNA damage, leading to its degradation. Ubiquitination by the DCX(DTL) complex is necessary to ensure proper cell cycle regulation and is PCNA-dependent: interacts with PCNA via its PIP-box, while the presence of the containing the 'K+4' motif in the PIP box, recruit the DCX(DTL) complex, leading to its degradation. Phosphorylation at Thr-28 by CDK2 targets CDT1 for ubiquitynation by SCF(SKP2) E3 ubiquitin ligase and subsequent degradation. The interaction with GMNN protects it against ubiquitination. Deubiquitinated by USP37. Ubiquitinated and degraded by the SCF(FBXO31) complex during the G2 phase to prevent re-replication. In terms of processing, phosphorylation by cyclin A-dependent kinases at Thr-28 targets CDT1 for ubiquitynation by SCF(SKP2) E3 ubiquitin ligase and subsequent degradation. Phosphorylated at Thr-28 by MAPK8/JNK1, which blocks replication licensing in response to stress. Binding to GMNN is not affected by phosphorylation.

The protein localises to the nucleus. Its subcellular location is the chromosome. The protein resides in the centromere. It is found in the kinetochore. Required for both DNA replication and mitosis. DNA replication licensing factor, required for pre-replication complex assembly. Cooperates with CDC6 and the origin recognition complex (ORC) during G1 phase of the cell cycle to promote the loading of the mini-chromosome maintenance (MCM) complex onto DNA to generate pre-replication complexes (pre-RC). Required also for mitosis by promoting stable kinetochore-microtubule attachments. Potential oncogene. The chain is DNA replication factor Cdt1 from Mus musculus (Mouse).